Here is a 244-residue protein sequence, read N- to C-terminus: 7-cyano-7-deazaguanine synthase (244 aa).

Position 17 to 27 (17 to 27) interacts with ATP; sequence FSGGQDSTTCL. Zn(2+) contacts are provided by Cys-205, Cys-220, Cys-223, and Cys-226.

The protein belongs to the QueC family. The cofactor is Zn(2+).

It catalyses the reaction 7-carboxy-7-deazaguanine + NH4(+) + ATP = 7-cyano-7-deazaguanine + ADP + phosphate + H2O + H(+). The protein operates within purine metabolism; 7-cyano-7-deazaguanine biosynthesis. In terms of biological role, catalyzes the ATP-dependent conversion of 7-carboxy-7-deazaguanine (CDG) to 7-cyano-7-deazaguanine (preQ(0)). The chain is 7-cyano-7-deazaguanine synthase from Bordetella parapertussis (strain 12822 / ATCC BAA-587 / NCTC 13253).